The following is a 436-amino-acid chain: Serine--tRNA ligase (436 aa).

242–244 (TAE) is an L-serine binding site. Position 273 to 275 (273 to 275 (RSE)) interacts with ATP. An L-serine-binding site is contributed by Glu-296. 360–363 (EISS) serves as a coordination point for ATP. L-serine is bound at residue Ser-395.

It belongs to the class-II aminoacyl-tRNA synthetase family. Type-1 seryl-tRNA synthetase subfamily. In terms of assembly, homodimer. The tRNA molecule binds across the dimer.

Its subcellular location is the cytoplasm. It catalyses the reaction tRNA(Ser) + L-serine + ATP = L-seryl-tRNA(Ser) + AMP + diphosphate + H(+). The enzyme catalyses tRNA(Sec) + L-serine + ATP = L-seryl-tRNA(Sec) + AMP + diphosphate + H(+). Its pathway is aminoacyl-tRNA biosynthesis; selenocysteinyl-tRNA(Sec) biosynthesis; L-seryl-tRNA(Sec) from L-serine and tRNA(Sec): step 1/1. In terms of biological role, catalyzes the attachment of serine to tRNA(Ser). Is also able to aminoacylate tRNA(Sec) with serine, to form the misacylated tRNA L-seryl-tRNA(Sec), which will be further converted into selenocysteinyl-tRNA(Sec). In Polynucleobacter asymbioticus (strain DSM 18221 / CIP 109841 / QLW-P1DMWA-1) (Polynucleobacter necessarius subsp. asymbioticus), this protein is Serine--tRNA ligase.